The following is a 147-amino-acid chain: Austinoid biosynthesis clusters protein H (147 aa).

Belongs to the trt14 isomerase family. Homodimer.

The protein operates within secondary metabolite biosynthesis; terpenoid biosynthesis. Part of the gene cluster B that mediates the biosynthesis of the fungal meroterpenoid acetoxydehydroaustin. The first step of the pathway is the synthesis of 3,5-dimethylorsellinic acid by the polyketide synthase ausA. 3,5-dimethylorsellinic acid is then prenylated by the polyprenyl transferase ausN. Further epoxidation by the FAD-dependent monooxygenase ausM and cyclization by the probable terpene cyclase ausL lead to the formation of protoaustinoid A. Protoaustinoid A is then oxidized to spiro-lactone preaustinoid A3 by the combined action of the FAD-binding monooxygenases ausB and ausC, and the dioxygenase ausE. Acid-catalyzed keto-rearrangement and ring contraction of the tetraketide portion of preaustinoid A3 by ausJ lead to the formation of preaustinoid A4. The aldo-keto reductase ausK, with the help of ausH, is involved in the next step by transforming preaustinoid A4 into isoaustinone which is in turn hydroxylated by the P450 monooxygenase ausI to form austinolide. The cytochrome P450 monooxygenase ausG then modifies austinolide to austinol. Austinol is further acetylated to austin by the O-acetyltransferase ausP, which spontaneously changes to dehydroaustin. The cytochrome P450 monooxygenase then converts dehydroaustin is into 7-dehydrodehydroaustin. The hydroxylation catalyzed by ausR permits the second O-acetyltransferase ausQ to add an additional acetyl group to the molecule, leading to the formation of acetoxydehydroaustin. Due to genetic rearrangements of the clusters and the subsequent loss of some enzymes, the end product of the Penicillium brasilianum austinoid biosynthesis clusters is acetoxydehydroaustin. The polypeptide is Austinoid biosynthesis clusters protein H (Penicillium brasilianum).